The following is a 1072-amino-acid chain: MLGDGKEGTSTIPGFNQIQFEGFYRFIDQGLIEELSKFPKIEDIDHEIEFQLFVETYQLVEPLIKERDAVYESLTYSSEIYVSAGLIWKTSRNMQEQRIFIGNIPLMNSLGISIVNGIYRIVINQILQSPGIYYQSELDHNGISVYTGTIISDWGGRLELEIDKKARIWARVSRKQKISILVLSSAMGSNLREILENVCYPEIFLSFLTDKEKKKIGSKENAILEFYQQFSCVGGDPIFSESLCKELQKKFFHQRCELGRIGRRNINSRLNLNIPQNNIFLLPRDILAAADHLIGMKFGMGTLDDMNHLKNKRIRSVADLLQDQLGLALARLENVVKGTIGGAIRHKLIPTPQNLVTSTPLTTTYESFFGLHPLSQVLDRTNPLTQIVHGRKLSYLGPGGLTGRTANFRIRDIHPSHYGRICPIDTSEGINVGLIGSLSIHARIGDWGSLESPFYELFCKSKKARIRMLFLSPSQDEYYMIAAGNSLALNRDIQEEQAVPARYRQEFLTIAWEEVHLRSIFPFQYFSIGASLIPFIEHNDANRALMSSNMQRQAVPLSRSEKCIVGTGLERQVALDSGVPAIAEHEGKILSTDTEKIILSGNGNTLSIPLIMYQRSNKNTCMHQKPQVRRGQCIKKGQILADGAATVGGELALGKNILVAYMPWEGYNFEDAVLISECLVYGDIYTSFHIRKYEIQTHVTTQGPERITKEIPHLEGRLLRNLDKNGIVMLGSWVETGDILVGKLTPQMAKESSYAPEDRLLRAILGIQVSTSKETCLKLPIGGRGRVIDVRWVQKKGGSSYNPEIIRVYISQKREIKVGDKVAGRHGNKGIISKILPRQDMPYLQDGRPVDMVFNPLGVPSRMNVGQIFECSLGLAGSLLDRHYRIAPFDERYEQEASRKLVFSELYEASKQTANPWVFEPEYPGKSRIFDGRTGDPFEQPVIIGKPYILKLIHQVDDKIHGRSSGHYALVTQQPLRGRSKQGGQRVGEMEVWALEGFGVAHILQEMLTYKSDHIRARQEVLGTTIIGGTIPKPEDAPESFRLLVRELRSLALELNHFLVSEKNFQINRQEV.

Belongs to the RNA polymerase beta chain family. In terms of assembly, in plastids the minimal PEP RNA polymerase catalytic core is composed of four subunits: alpha, beta, beta', and beta''. When a (nuclear-encoded) sigma factor is associated with the core the holoenzyme is formed, which can initiate transcription.

It localises to the plastid. The protein resides in the chloroplast. The catalysed reaction is RNA(n) + a ribonucleoside 5'-triphosphate = RNA(n+1) + diphosphate. DNA-dependent RNA polymerase catalyzes the transcription of DNA into RNA using the four ribonucleoside triphosphates as substrates. This chain is DNA-directed RNA polymerase subunit beta, found in Draba nemorosa (Woodland whitlowgrass).